The sequence spans 275 residues: Large ribosomal subunit protein uL2 (275 aa).

The segment covering 38–53 (SSKAGRNNNGRITTRH) has biased composition (polar residues). Disordered stretches follow at residues 38 to 60 (SSKA…GHKQ) and 224 to 257 (AMNP…KGFR).

It belongs to the universal ribosomal protein uL2 family. As to quaternary structure, part of the 50S ribosomal subunit. Forms a bridge to the 30S subunit in the 70S ribosome.

One of the primary rRNA binding proteins. Required for association of the 30S and 50S subunits to form the 70S ribosome, for tRNA binding and peptide bond formation. It has been suggested to have peptidyltransferase activity; this is somewhat controversial. Makes several contacts with the 16S rRNA in the 70S ribosome. This Burkholderia pseudomallei (strain 1106a) protein is Large ribosomal subunit protein uL2.